The sequence spans 306 residues: Glutaminase (306 aa).

Serine 62, asparagine 114, glutamate 159, asparagine 166, tyrosine 190, tyrosine 242, and valine 260 together coordinate substrate.

The protein belongs to the glutaminase family. Homotetramer.

The enzyme catalyses L-glutamine + H2O = L-glutamate + NH4(+). In Clostridium tetani (strain Massachusetts / E88), this protein is Glutaminase.